The primary structure comprises 516 residues: Maturase K (516 aa).

It belongs to the intron maturase 2 family. MatK subfamily.

The protein localises to the plastid. It localises to the chloroplast. Usually encoded in the trnK tRNA gene intron. Probably assists in splicing its own and other chloroplast group II introns. This Chara connivens (Convergent stonewort) protein is Maturase K.